The following is a 168-amino-acid chain: Troponin I, cardiac muscle (168 aa).

A compositionally biased stretch (basic and acidic residues) spans 128–147; that stretch reads VRKDDAEKESREVGDWRKNV. The disordered stretch occupies residues 128–168; sequence VRKDDAEKESREVGDWRKNVDALSGMEGRKKKFEAPGGGQG.

It belongs to the troponin I family. Binds to actin and tropomyosin.

Its function is as follows. Troponin I is the inhibitory subunit of troponin, the thin filament regulatory complex which confers calcium-sensitivity to striated muscle actomyosin ATPase activity. The protein is Troponin I, cardiac muscle (TNNI3) of Gallus gallus (Chicken).